The chain runs to 162 residues: Protein NrdI (162 aa).

It belongs to the NrdI family.

In terms of biological role, probably involved in ribonucleotide reductase function. This is Protein NrdI from Streptococcus pyogenes serotype M28 (strain MGAS6180).